We begin with the raw amino-acid sequence, 118 residues long: UPF0295 protein BCG9842_B4782 (118 aa).

The next 2 helical transmembrane spans lie at 12 to 32 and 43 to 63; these read IRTF…LGVF and FMMV…WIGM.

The protein belongs to the UPF0295 family.

It is found in the cell membrane. In Bacillus cereus (strain G9842), this protein is UPF0295 protein BCG9842_B4782.